The chain runs to 543 residues: tRNA (guanine(37)-N(1))-methyltransferase (543 aa).

The N-terminal 59 residues, 1–59 (MLKSLCFVIRPAIVSRPQFRLPTIARLSLRQFQNQPQSVGFFTMAPLETRALALSPSAT), are a transit peptide targeting the mitochondrion. S-adenosyl-L-methionine-binding positions include H282, 320-321 (DL), and 348-349 (DG). The tract at residues 366–405 (DPAPPPKVSNRQRDREAKEARRKREQAKAAGQPVTETAPM) is disordered. Position 431 (N431) interacts with S-adenosyl-L-methionine.

The protein belongs to the class I-like SAM-binding methyltransferase superfamily. TRM5/TYW2 family. As to quaternary structure, monomer.

It is found in the mitochondrion matrix. Its subcellular location is the nucleus. The protein resides in the cytoplasm. It carries out the reaction guanosine(37) in tRNA + S-adenosyl-L-methionine = N(1)-methylguanosine(37) in tRNA + S-adenosyl-L-homocysteine + H(+). In terms of biological role, specifically methylates the N1 position of guanosine-37 in various cytoplasmic and mitochondrial tRNAs. Methylation is not dependent on the nature of the nucleoside 5' of the target nucleoside. This is the first step in the biosynthesis of wybutosine (yW), a modified base adjacent to the anticodon of tRNAs and required for accurate decoding. This Cryptococcus neoformans var. neoformans serotype D (strain JEC21 / ATCC MYA-565) (Filobasidiella neoformans) protein is tRNA (guanine(37)-N(1))-methyltransferase.